The following is a 354-amino-acid chain: Macrosialin (354 aa).

The first 21 residues, 1-21 (MRLAVLFSGALLGLLAAQGTG), serve as a signal peptide directing secretion. Residues 22–319 (NDCPHKKSAT…QSFSCPSDRS (298 aa)) are Extracellular-facing. Residues 23-140 (DCPHKKSATL…SPGFTSSAHP (118 aa)) form a mucin-like region. A compositionally biased stretch (low complexity) spans 40–51 (PTVTESTGTTSH). Residues 40 to 162 (PTVTESTGTT…SKETIGDYTW (123 aa)) are disordered. The span at 52-61 (RTTKSHKTTT) shows a compositional bias: basic residues. Residues 62 to 84 (HRTTTTGTTSHGPTTATHNPTTT) show a composition bias toward low complexity. 2 repeat units span residues 70-99 (TSHGPTTATHNPTTTSHGNVTVHPTSNSTA) and 100-129 (TSQGPSTATHSPATTSHGNATVHPTSNSTA). The interval 70-129 (TSHGPTTATHNPTTTSHGNVTVHPTSNSTATSQGPSTATHSPATTSHGNATVHPTSNSTA) is 2 X 30 AA tandem repeats. Residues 85–102 (SHGNVTVHPTSNSTATSQ) show a composition bias toward polar residues. N88 and N96 each carry an N-linked (GlcNAc...) asparagine glycan. Residues 103 to 117 (GPSTATHSPATTSHG) show a composition bias toward low complexity. N118 and N126 each carry an N-linked (GlcNAc...) asparagine glycan. The span at 121-135 (VHPTSNSTATSPGFT) shows a compositional bias: polar residues. Over residues 140-150 (PEPPPPSPSPS) the composition is skewed to pro residues. 5 N-linked (GlcNAc...) asparagine glycosylation sites follow: N164, N199, N246, N261, and N279. An intrachain disulfide couples C169 to C207. The cysteines at positions 277 and 314 are disulfide-linked. A helical transmembrane segment spans residues 320-344 (ILLPLIIGLILLGLLALVLIAFCII). Over 345–354 (RRRPSAYQAL) the chain is Cytoplasmic.

Belongs to the LAMP family. In terms of processing, N- and O-glycosylated. As to expression, highly expressed by blood monocytes and tissue macrophages. Also expressed in lymphocytes, fibroblasts and endothelial cells. Expressed in many tumor cell lines which could allow them to attach to selectins on vascular endothelium, facilitating their dissemination to secondary sites.

The protein localises to the cell membrane. It localises to the endosome membrane. The protein resides in the lysosome membrane. Functionally, could play a role in phagocytic activities of tissue macrophages, both in intracellular lysosomal metabolism and extracellular cell-cell and cell-pathogen interactions. Binds to tissue- and organ-specific lectins or selectins, allowing homing of macrophage subsets to particular sites. Rapid recirculation of CD68 from endosomes and lysosomes to the plasma membrane may allow macrophages to crawl over selectin-bearing substrates or other cells. This is Macrosialin (CD68) from Homo sapiens (Human).